A 426-amino-acid chain; its full sequence is Protein trichome birefringence-like 19 (426 aa).

Residues Leu-15 to Leu-35 traverse the membrane as a helical; Signal-anchor for type II membrane protein segment. The GDS motif signature appears at Gly-142–Ser-144. A DCXHWCLPGXXDXWN motif motif is present at residues Asp-388–Asn-402.

This sequence belongs to the PC-esterase family. TBL subfamily.

It is found in the membrane. May act as a bridging protein that binds pectin and other cell wall polysaccharides. Probably involved in maintaining esterification of pectins. May be involved in the specific O-acetylation of cell wall polymers. The sequence is that of Protein trichome birefringence-like 19 (TBL19) from Arabidopsis thaliana (Mouse-ear cress).